Reading from the N-terminus, the 426-residue chain is Serine--tRNA ligase (426 aa).

Position 231 to 233 (231 to 233) interacts with L-serine; sequence TAE. 262–264 serves as a coordination point for ATP; the sequence is RSE. L-serine is bound at residue glutamate 285. 349-352 serves as a coordination point for ATP; the sequence is EISS. Serine 385 contributes to the L-serine binding site.

Belongs to the class-II aminoacyl-tRNA synthetase family. Type-1 seryl-tRNA synthetase subfamily. Homodimer. The tRNA molecule binds across the dimer.

The protein resides in the cytoplasm. The enzyme catalyses tRNA(Ser) + L-serine + ATP = L-seryl-tRNA(Ser) + AMP + diphosphate + H(+). The catalysed reaction is tRNA(Sec) + L-serine + ATP = L-seryl-tRNA(Sec) + AMP + diphosphate + H(+). Its pathway is aminoacyl-tRNA biosynthesis; selenocysteinyl-tRNA(Sec) biosynthesis; L-seryl-tRNA(Sec) from L-serine and tRNA(Sec): step 1/1. Catalyzes the attachment of serine to tRNA(Ser). Is also able to aminoacylate tRNA(Sec) with serine, to form the misacylated tRNA L-seryl-tRNA(Sec), which will be further converted into selenocysteinyl-tRNA(Sec). In Lysinibacillus sphaericus (strain C3-41), this protein is Serine--tRNA ligase.